The primary structure comprises 440 residues: tRNA(Ile)-lysidine synthase (440 aa).

Position 25 to 30 (25 to 30 (SGGVDS)) interacts with ATP.

This sequence belongs to the tRNA(Ile)-lysidine synthase family.

It localises to the cytoplasm. It carries out the reaction cytidine(34) in tRNA(Ile2) + L-lysine + ATP = lysidine(34) in tRNA(Ile2) + AMP + diphosphate + H(+). Ligates lysine onto the cytidine present at position 34 of the AUA codon-specific tRNA(Ile) that contains the anticodon CAU, in an ATP-dependent manner. Cytidine is converted to lysidine, thus changing the amino acid specificity of the tRNA from methionine to isoleucine. This is tRNA(Ile)-lysidine synthase from Vibrio cholerae serotype O1 (strain ATCC 39541 / Classical Ogawa 395 / O395).